Consider the following 262-residue polypeptide: Shikimate dehydrogenase (NADP(+)) (262 aa).

Residues 15–17 and Thr62 contribute to the shikimate site; that span reads SRS. Lys66 (proton acceptor) is an active-site residue. Glu78 provides a ligand contact to NADP(+). Shikimate contacts are provided by Asn87 and Asp102. NADP(+) contacts are provided by residues 126-130, 150-155, and Met214; these read GAGGA and NRTLAR. Shikimate is bound at residue Tyr216. Residue Gly236 participates in NADP(+) binding.

It belongs to the shikimate dehydrogenase family. Homodimer.

The enzyme catalyses shikimate + NADP(+) = 3-dehydroshikimate + NADPH + H(+). It functions in the pathway metabolic intermediate biosynthesis; chorismate biosynthesis; chorismate from D-erythrose 4-phosphate and phosphoenolpyruvate: step 4/7. In terms of biological role, involved in the biosynthesis of the chorismate, which leads to the biosynthesis of aromatic amino acids. Catalyzes the reversible NADPH linked reduction of 3-dehydroshikimate (DHSA) to yield shikimate (SA). This Acinetobacter baumannii (strain AB0057) protein is Shikimate dehydrogenase (NADP(+)).